Consider the following 359-residue polypeptide: Molybdenum import ATP-binding protein ModC (359 aa).

Positions 1–229 constitute an ABC transporter domain; that stretch reads MLELNFSQQL…SALRPWLQRE (229 aa). 31–38 lines the ATP pocket; sequence GLSGAGKT. The region spanning 289–354 is the Mop domain; sequence SSSIRNILPV…IKSVSFNRQN (66 aa).

Belongs to the ABC transporter superfamily. Molybdate importer (TC 3.A.1.8) family. The complex is composed of two ATP-binding proteins (ModC), two transmembrane proteins (ModB) and a solute-binding protein (ModA).

It localises to the cell inner membrane. It catalyses the reaction molybdate(out) + ATP + H2O = molybdate(in) + ADP + phosphate + H(+). Its function is as follows. Part of the ABC transporter complex ModABC involved in molybdenum import. Responsible for energy coupling to the transport system. This is Molybdenum import ATP-binding protein ModC from Yersinia pseudotuberculosis serotype I (strain IP32953).